The sequence spans 437 residues: O-methyltransferase 3 (437 aa).

The interval 1–21 (MNNKTSNGDITNDEPTVGSKR) is disordered. A coiled-coil region spans residues 146–180 (SDNLYQDKDDLEKQEKEREKKMANLLSKNVDIKEL). The interval 408–437 (DPINNNNNNNNNNNNNNNNTTTTTSTTTTN) is disordered. The segment covering 411–437 (NNNNNNNNNNNNNNNNTTTTTSTTTTN) has biased composition (low complexity).

Belongs to the methyltransferase superfamily. METL family.

Probable methyltransferase. This is O-methyltransferase 3 (omt3) from Dictyostelium discoideum (Social amoeba).